The following is an 874-amino-acid chain: Alanine--tRNA ligase (874 aa).

Residues His-564, His-568, Cys-665, and His-669 each coordinate Zn(2+).

It belongs to the class-II aminoacyl-tRNA synthetase family. Zn(2+) serves as cofactor.

It is found in the cytoplasm. It catalyses the reaction tRNA(Ala) + L-alanine + ATP = L-alanyl-tRNA(Ala) + AMP + diphosphate. Its function is as follows. Catalyzes the attachment of alanine to tRNA(Ala) in a two-step reaction: alanine is first activated by ATP to form Ala-AMP and then transferred to the acceptor end of tRNA(Ala). Also edits incorrectly charged Ser-tRNA(Ala) and Gly-tRNA(Ala) via its editing domain. This is Alanine--tRNA ligase from Burkholderia multivorans (strain ATCC 17616 / 249).